The primary structure comprises 149 residues: Large ribosomal subunit protein uL15 (149 aa).

Residues 1–12 (MSEPIKLHDLRP) are compositionally biased toward basic and acidic residues. The disordered stretch occupies residues 1–55 (MSEPIKLHDLRPAKGANKPKTRVGRGEASKGKTAGRGTKGTKARKQVSAAFEGGQ).

It belongs to the universal ribosomal protein uL15 family. In terms of assembly, part of the 50S ribosomal subunit.

Binds to the 23S rRNA. The chain is Large ribosomal subunit protein uL15 from Corynebacterium kroppenstedtii (strain DSM 44385 / JCM 11950 / CIP 105744 / CCUG 35717).